Consider the following 265-residue polypeptide: 4-hydroxy-tetrahydrodipicolinate reductase (265 aa).

NAD(+)-binding positions include 7–12 (GASGRM) and Asp-33. An NADP(+)-binding site is contributed by Arg-34. Residues 96-98 (GTT) and 120-123 (AANM) contribute to the NAD(+) site. His-153 functions as the Proton donor/acceptor in the catalytic mechanism. Residue His-154 coordinates (S)-2,3,4,5-tetrahydrodipicolinate. The active-site Proton donor is the Lys-157. 163 to 164 (GT) lines the (S)-2,3,4,5-tetrahydrodipicolinate pocket.

It belongs to the DapB family.

It is found in the cytoplasm. The catalysed reaction is (S)-2,3,4,5-tetrahydrodipicolinate + NAD(+) + H2O = (2S,4S)-4-hydroxy-2,3,4,5-tetrahydrodipicolinate + NADH + H(+). It catalyses the reaction (S)-2,3,4,5-tetrahydrodipicolinate + NADP(+) + H2O = (2S,4S)-4-hydroxy-2,3,4,5-tetrahydrodipicolinate + NADPH + H(+). It participates in amino-acid biosynthesis; L-lysine biosynthesis via DAP pathway; (S)-tetrahydrodipicolinate from L-aspartate: step 4/4. Catalyzes the conversion of 4-hydroxy-tetrahydrodipicolinate (HTPA) to tetrahydrodipicolinate. This chain is 4-hydroxy-tetrahydrodipicolinate reductase, found in Burkholderia orbicola (strain AU 1054).